We begin with the raw amino-acid sequence, 36 residues long: Asteropin-A (36 aa).

Cystine bridges form between C2–C18, C9–C25, and C17–C35.

In terms of biological role, sialidase inhibitor. Competitively inhibits bacterial sialidases, but not viral sialidases. Does not inhibit glycosidases or proteases. Has no antitumor activity. This chain is Asteropin-A, found in Asteropus simplex (Marine sponge).